Here is a 122-residue protein sequence, read N- to C-terminus: Large ribosomal subunit protein uL14 (122 aa).

Belongs to the universal ribosomal protein uL14 family. In terms of assembly, part of the 50S ribosomal subunit. Forms a cluster with proteins L3 and L19. In the 70S ribosome, L14 and L19 interact and together make contacts with the 16S rRNA in bridges B5 and B8.

Binds to 23S rRNA. Forms part of two intersubunit bridges in the 70S ribosome. This Lawsonia intracellularis (strain PHE/MN1-00) protein is Large ribosomal subunit protein uL14.